Here is a 552-residue protein sequence, read N- to C-terminus: Mothers against decapentaplegic homolog 4 (552 aa).

The mediates interaction with ZBTB7A stretch occupies residues 1 to 322 (MDNMSITNTP…PISNHPAPEY (322 aa)). One can recognise an MH1 domain in the interval 18–142 (SIVHSLMCHR…YERVVSPGID (125 aa)). Lys-37 carries the N6-acetyllysine modification. The required for interaction with TSC22D1 stretch occupies residues 44 to 69 (VKKLKEKKDELDSLITAITTNGAHPS). Zn(2+) is bound at residue Cys-71. A Glycyl lysine isopeptide (Lys-Gly) (interchain with G-Cter in SUMO2) cross-link involves residue Lys-113. 3 residues coordinate Zn(2+): Cys-115, Cys-127, and His-132. A disordered region spans residues 167 to 193 (EGQPSLPTEGHSIQTIQHPPSNRASTE). Residues 177–193 (HSIQTIQHPPSNRASTE) show a composition bias toward polar residues. The tract at residues 275–320 (PYTPNLPHHQNGHLQHHPPMPPHPGHYWPVHNELAFQPPISNHPAP) is SAD. The 230-residue stretch at 323 to 552 (WCSIAYFEMD…MPIADPQPLD (230 aa)) folds into the MH2 domain. Lys-428 and Lys-507 each carry N6-acetyllysine. Lys-519 is covalently cross-linked (Glycyl lysine isopeptide (Lys-Gly) (interchain with G-Cter in ubiquitin)).

This sequence belongs to the dwarfin/SMAD family. Monomer; in the absence of TGF-beta activation. Heterotrimer; on TGF-beta activation. Heterotrimer composed of two molecules of a C-terminally phosphorylated R-SMAD molecule, SMAD2 or SMAD3, and one molecule of SMAD4 to form the transcriptional active SMAD2/SMAD3-SMAD4 complex. Found in a ternary complex composed of SMAD4, STK11/LKB1 and STK11IP. Found in a complex with SMAD1 and YY1. Identified in a complex that contains at least ZNF451, SMAD2, SMAD3 and SMAD4. Interacts with ATF2, COPS5, DACH1, MSG1, SKI, STK11/LKB1, STK11IP and TRIM33. Associates with ZNF423 or ZNF521 in response to BMP2 leading to activate transcription of BMP target genes. Interacts with USP9X. Interacts with RBPMS. Interacts with WWTR1 (via coiled-coil domain). Interacts with CITED1 and CITED2. Interacts with PDPK1 (via PH domain). Interacts with VPS39; this interaction affects heterodimer formation with SMAD3, but not with SMAD2, and leads to inhibition of SMAD3-dependent transcription activation. Interactions with VPS39 and SMAD2 may be mutually exclusive. Interacts (via MH2 domain) with ZNF451 (via N-terminal zinc-finger domains). Interacts with ZC3H3. Interacts weakly with ZNF8. Interacts with NUP93 and IPO7; translocates SMAD4 to the nucleus through the NPC upon BMP7 stimulation resulting in activation of SMAD4 signaling. Interacts with CREB3L1, the interaction takes place upon TGFB1 induction and SMAD4 acts as a CREB3L1 coactivator to induce the expression of genes involved in the assembly of collagen extracellular matrix. Interacts with DLX1. Interacts with ZBTB7A; the interaction is direct and stimulated by TGFB1. Interacts with CREBBP; the recruitment of this transcriptional coactivator is negatively regulated by ZBTB7A. Interacts with EP300; the interaction with this transcriptional coactivator is negatively regulated by ZBTB7A. Interacts with HDAC1. Interacts (via MH2 domain) with ZMIZ1 (via SP-RING-type domain); in the TGF-beta signaling pathway increases the activity of the SMAD3/SMAD4 transcriptional complex. Interacts (via N-terminus) with TSC22D1. In terms of processing, phosphorylated by PDPK1. Post-translationally, monoubiquitinated on Lys-519 by E3 ubiquitin-protein ligase TRIM33. Monoubiquitination hampers its ability to form a stable complex with activated SMAD2/3 resulting in inhibition of TGF-beta/BMP signaling cascade. Deubiquitination by USP9X restores its competence to mediate TGF-beta signaling.

It localises to the cytoplasm. The protein localises to the nucleus. In terms of biological role, common SMAD (co-SMAD) is the coactivator and mediator of signal transduction by TGF-beta (transforming growth factor). Component of the heterotrimeric SMAD2/SMAD3-SMAD4 complex that forms in the nucleus and is required for the TGF-mediated signaling. Promotes binding of the SMAD2/SMAD4/FAST-1 complex to DNA and provides an activation function required for SMAD1 or SMAD2 to stimulate transcription. Component of the multimeric SMAD3/SMAD4/JUN/FOS complex which forms at the AP1 promoter site; required for synergistic transcriptional activity in response to TGF-beta. Acts synergistically with SMAD1 and YY1 in bone morphogenetic protein (BMP)-mediated cardiac-specific gene expression. Binds to SMAD binding elements (SBEs) (5'-GTCT/AGAC-3') within BMP response element (BMPRE) of cardiac activating regions. May act as a tumor suppressor. Positively regulates PDPK1 kinase activity by stimulating its dissociation from the 14-3-3 protein YWHAQ which acts as a negative regulator. In muscle physiology, plays a central role in the balance between atrophy and hypertrophy. When recruited by MSTN, promotes atrophy response via phosphorylated SMAD2/4. MSTN decrease causes SMAD4 release and subsequent recruitment by the BMP pathway to promote hypertrophy via phosphorylated SMAD1/5/8. The protein is Mothers against decapentaplegic homolog 4 (Smad4) of Rattus norvegicus (Rat).